Here is a 336-residue protein sequence, read N- to C-terminus: MASQPPFKTNFCSIFGSSFPNSTSESNTNTSTIQTSGIKLPVIDLSHLTSGEEVKRKRCVKQMVAAAKEWGFFQIVNHGIPKDVFEMMLLEEKKLFDQPFSVKVRERFSDLSKNSYRWGNPSATSPAQYSVSEAFHIILSEVSRISDDRNNLRTIVETYVQEIARVAQMICEILGKQVNVSSEYFENIFELENSFLRLNKYHPSVFGSEVFGLVPHTDTSFLTILSQDQIGGLELENNGQWISVKPCLEALTVNIGDMFQALSNGVYQSVRHRVISPANIERMSIAFFVCPYLETEIDCFGYPKKYRRFSFREYKEQSEHDVKETGDKVGLSRFLI.

A Fe2OG dioxygenase domain is found at 191–291; that stretch reads LENSFLRLNK…RMSIAFFVCP (101 aa). 3 residues coordinate Fe cation: H216, D218, and H272. R282 is a catalytic residue. R282 is a binding site for 2-oxoglutarate.

It belongs to the iron/ascorbate-dependent oxidoreductase family. GA2OX subfamily. It depends on Fe(2+) as a cofactor.

It carries out the reaction gibberellin A1 + 2-oxoglutarate + O2 = gibberellin A8 + succinate + CO2. The protein operates within plant hormone biosynthesis; gibberellin biosynthesis. Functionally, catalyzes the 2-beta-hydroxylation of gibberellins (GA) precursors, rendering them unable to be converted to active GAs. Hydroxylates the C20-GA GA12 and GA53, but is not active on C19-GAs, like GA1, GA4, GA9 and GA20. This is Gibberellin 2-beta-dioxygenase 7 (GA2OX7) from Arabidopsis thaliana (Mouse-ear cress).